Reading from the N-terminus, the 252-residue chain is JmjC domain-containing protein A (252 aa).

In terms of domain architecture, JmjC spans 103 to 252 (PYLRNFGMLD…VSCWGKEMIM (150 aa)).

The protein is JmjC domain-containing protein A (jcdA) of Dictyostelium discoideum (Social amoeba).